An 827-amino-acid polypeptide reads, in one-letter code: Glycerol-3-phosphate acyltransferase (827 aa).

Residues 325 to 330 (CHRSHM) carry the HXXXXD motif motif.

It belongs to the GPAT/DAPAT family.

It is found in the cell inner membrane. It catalyses the reaction sn-glycerol 3-phosphate + an acyl-CoA = a 1-acyl-sn-glycero-3-phosphate + CoA. It functions in the pathway phospholipid metabolism; CDP-diacylglycerol biosynthesis; CDP-diacylglycerol from sn-glycerol 3-phosphate: step 1/3. In Shigella flexneri serotype 5b (strain 8401), this protein is Glycerol-3-phosphate acyltransferase.